A 1340-amino-acid chain; its full sequence is DNA-directed RNA polymerase subunit beta (1340 aa).

The protein belongs to the RNA polymerase beta chain family. The RNAP catalytic core consists of 2 alpha, 1 beta, 1 beta' and 1 omega subunit. When a sigma factor is associated with the core the holoenzyme is formed, which can initiate transcription.

The enzyme catalyses RNA(n) + a ribonucleoside 5'-triphosphate = RNA(n+1) + diphosphate. Its function is as follows. DNA-dependent RNA polymerase catalyzes the transcription of DNA into RNA using the four ribonucleoside triphosphates as substrates. This Baumannia cicadellinicola subsp. Homalodisca coagulata protein is DNA-directed RNA polymerase subunit beta.